Reading from the N-terminus, the 150-residue chain is Large ribosomal subunit protein bL9 (150 aa).

It belongs to the bacterial ribosomal protein bL9 family.

Binds to the 23S rRNA. In Streptococcus sanguinis (strain SK36), this protein is Large ribosomal subunit protein bL9.